Here is an 85-residue protein sequence, read N- to C-terminus: Makatoxin-3 (85 aa).

The first 19 residues, methionine 1 to serine 19, serve as a signal peptide directing secretion. The 63-residue stretch at arginine 21–isoleucine 83 folds into the LCN-type CS-alpha/beta domain. 4 disulfides stabilise this stretch: cysteine 31/cysteine 82, cysteine 35/cysteine 55, cysteine 41/cysteine 65, and cysteine 45/cysteine 67.

This sequence belongs to the long (4 C-C) scorpion toxin superfamily. Sodium channel inhibitor family. Alpha subfamily. Expressed by the venom gland.

The protein resides in the secreted. This protein markedly relaxes the rat carbachol-precontracted anococcygeus muscle. This relaxation is inhibited by the inhibitor of nitric oxide (NO) synthase, N-nitro-L-arginine methyl ester (L-NAME), suggesting that the response induced by this protein is NO-mediated. The polypeptide is Makatoxin-3 (Olivierus martensii (Manchurian scorpion)).